A 105-amino-acid polypeptide reads, in one-letter code: Iron-sulfur cluster assembly protein CyaY (105 aa).

It belongs to the frataxin family.

In terms of biological role, involved in iron-sulfur (Fe-S) cluster assembly. May act as a regulator of Fe-S biogenesis. This is Iron-sulfur cluster assembly protein CyaY from Paraburkholderia xenovorans (strain LB400).